Here is a 382-residue protein sequence, read N- to C-terminus: Alkanesulfonate monooxygenase (382 aa).

This sequence belongs to the SsuD family.

The enzyme catalyses an alkanesulfonate + FMNH2 + O2 = an aldehyde + FMN + sulfite + H2O + 2 H(+). In terms of biological role, catalyzes the desulfonation of aliphatic sulfonates. This chain is Alkanesulfonate monooxygenase, found in Pseudomonas entomophila (strain L48).